Reading from the N-terminus, the 213-residue chain is Ergothioneine transport ATP-binding protein EgtV (213 aa).

The region spanning 5–212 (VTIENVSFNY…ATKTLEIKAL (208 aa)) is the ABC transporter domain. 37-44 (GESGSGKS) serves as a coordination point for ATP.

This sequence belongs to the ABC transporter superfamily. In terms of assembly, the complex is composed of two ATP-binding proteins (EgtV) and two transmembrane proteins (EgtU).

It localises to the cell inner membrane. It catalyses the reaction ergothioneine(out) + ATP + H2O = ergothioneine(in) + ADP + phosphate + H(+). Part of the ABC transporter complex EgtUV involved in the uptake of ergothioneine (EGT), a natural low-molecular weight (LMW) thiol antioxidant which protects H.pylori against bleach stress. Responsible for energy coupling to the transport system. The chain is Ergothioneine transport ATP-binding protein EgtV from Helicobacter pylori (strain G27).